The chain runs to 570 residues: Apyrase (570 aa).

Positions 1–23 are cleaved as a signal peptide; it reads MALVRFATIITVLCHLAIQDGAA. Positions 43, 45, and 94 each coordinate a divalent metal cation. N-linked (GlcNAc...) asparagine glycosylation occurs at asparagine 108. Residues asparagine 126, histidine 229, and histidine 253 each coordinate a divalent metal cation. Asparagine 287 and asparagine 326 each carry an N-linked (GlcNAc...) asparagine glycan. Arginine 367 provides a ligand contact to AMP. A glycan (N-linked (GlcNAc...) asparagine) is linked at asparagine 387. AMP is bound by residues arginine 402 and aspartate 507. Asparagine 552 and asparagine 555 each carry an N-linked (GlcNAc...) asparagine glycan.

It belongs to the 5'-nucleotidase family. Interacts with human PLAT; the interaction results in PLAT activation probably via an allosteric activation mechanism. A divalent metal cation is required as a cofactor. Saliva (at protein level). Salivary gland (at protein level). Not detected in midgut.

The protein resides in the secreted. It carries out the reaction a ribonucleoside 5'-triphosphate + 2 H2O = a ribonucleoside 5'-phosphate + 2 phosphate + 2 H(+). Functionally, cleaves adenosine triphosphate (ATP) and adenosine diphosphate (ADP) to adenosine monophosphate (AMP) and inorganic phosphate. Enhances fibrin degradation in the midgut blood bolus. Activates human tissue plasminogen activator (PLAT), probably via an allosteric activation mechanism. Inhibits ADP-mediated host platelet aggregation in vitro and in mosquito midgut. Inhibits host neutrophil activation in the mosquito midgut: reduces neutrophil extracellular traps formation in the presence of platelets and the formation of total cell- and mitochondrial-derived reactive oxygen species. (Microbial infection) Promotes Plasmodium berghei parasite transmission from the mammalian host to the mosquito probably by reducing the blood bolus viscosity. Facilitates sporozoite transmission from the mosquito to the mammalian host during blood feeding. This chain is Apyrase, found in Anopheles gambiae (African malaria mosquito).